Reading from the N-terminus, the 37-residue chain is Large ribosomal subunit protein bL36 (37 aa).

The protein belongs to the bacterial ribosomal protein bL36 family.

This Aquifex aeolicus (strain VF5) protein is Large ribosomal subunit protein bL36.